Reading from the N-terminus, the 378-residue chain is 2-aminoethylphosphonate--pyruvate transaminase 1 (378 aa).

Lys-194 is modified (N6-(pyridoxal phosphate)lysine).

It belongs to the class-V pyridoxal-phosphate-dependent aminotransferase family. PhnW subfamily. Homodimer. Pyridoxal 5'-phosphate is required as a cofactor.

It carries out the reaction (2-aminoethyl)phosphonate + pyruvate = phosphonoacetaldehyde + L-alanine. Functionally, involved in phosphonate degradation. The protein is 2-aminoethylphosphonate--pyruvate transaminase 1 of Cupriavidus pinatubonensis (strain JMP 134 / LMG 1197) (Cupriavidus necator (strain JMP 134)).